A 746-amino-acid chain; its full sequence is Ferrienterobactin receptor (746 aa).

The signal sequence occupies residues 1-22; that stretch reads MNKKIHSLALLVNLGIYGVAQA. Residues 34–41 carry the TonB box motif; that stretch reads DTIVVTAA. Residues 42–169 enclose the TBDR plug domain; that stretch reads EQNLQAPGVS…AGGVVNIITK (128 aa). The tract at residues 76-96 is disordered; sequence GVNLTGNSTSGQRGNNRQIDI. Over residues 79-93 the composition is skewed to polar residues; the sequence is LTGNSTSGQRGNNRQ. In terms of domain architecture, TBDR beta-barrel spans 174–746; that stretch reads EWHGSWDAYF…TWYMSVNTHF (573 aa). The short motif at 729–746 is the TonB C-terminal box element; sequence YTYNEPGRTWYMSVNTHF.

Belongs to the TonB-dependent receptor family.

The protein resides in the cell outer membrane. Its function is as follows. This protein is involved in the initial step of iron uptake by binding ferrienterobactin (Fe-ENT), an iron chelatin siderophore that allows E.coli to extract iron from the environment. FepA also acts as a receptor for colicins B and D. In Escherichia coli (strain K12), this protein is Ferrienterobactin receptor (fepA).